Consider the following 164-residue polypeptide: V-type proton ATPase 16 kDa proteolipid subunit (164 aa).

The Lumenal segment spans residues M1–T9. The helical transmembrane segment at A10–G32 threads the bilayer. Over T33–S54 the chain is Cytoplasmic. Residues I55 to I75 form a helical membrane-spanning segment. Residues S76–H94 lie on the Lumenal side of the membrane. Residues L95–G116 traverse the membrane as a helical segment. Over D117–K128 the chain is Cytoplasmic. Residues L129–L154 form a helical membrane-spanning segment. The Lumenal segment spans residues S155–E164.

It belongs to the V-ATPase proteolipid subunit family. In terms of assembly, V-ATPase is a heteromultimeric enzyme composed of a peripheral catalytic V1 complex (main components: subunits A, B, C, D, E, and F) attached to an integral membrane V0 proton pore complex (main component: the proteolipid protein; which is present as a hexamer that forms the proton-conducting pore).

The protein resides in the vacuole membrane. Its function is as follows. Proton-conducting pore forming subunit of the membrane integral V0 complex of vacuolar ATPase. V-ATPase is responsible for acidifying a variety of intracellular compartments in eukaryotic cells. In Solanum lycopersicum (Tomato), this protein is V-type proton ATPase 16 kDa proteolipid subunit.